The primary structure comprises 356 residues: tRNA N6-adenosine threonylcarbamoyltransferase (356 aa).

Residues H111 and H115 each contribute to the Fe cation site. Substrate is bound by residues 143-147 (LASGG), D178, G191, D195, and N286. D314 lines the Fe cation pocket.

Belongs to the KAE1 / TsaD family. Fe(2+) is required as a cofactor.

It is found in the cytoplasm. The catalysed reaction is L-threonylcarbamoyladenylate + adenosine(37) in tRNA = N(6)-L-threonylcarbamoyladenosine(37) in tRNA + AMP + H(+). In terms of biological role, required for the formation of a threonylcarbamoyl group on adenosine at position 37 (t(6)A37) in tRNAs that read codons beginning with adenine. Is involved in the transfer of the threonylcarbamoyl moiety of threonylcarbamoyl-AMP (TC-AMP) to the N6 group of A37, together with TsaE and TsaB. TsaD likely plays a direct catalytic role in this reaction. The protein is tRNA N6-adenosine threonylcarbamoyltransferase of Sorangium cellulosum (strain So ce56) (Polyangium cellulosum (strain So ce56)).